Reading from the N-terminus, the 343-residue chain is Ornithine carbamoyltransferase, catabolic (343 aa).

Position 62–65 (62–65 (STRT)) interacts with carbamoyl phosphate. Residue His-79 coordinates Ni(2+). Carbamoyl phosphate-binding positions include Gln-89, Arg-113, and 140 to 143 (HPTQ). L-ornithine contacts are provided by residues Asn-172, Asp-236, and 240 to 241 (SM). Carbamoyl phosphate is bound by residues 278-279 (CL) and Arg-323.

The protein belongs to the aspartate/ornithine carbamoyltransferase superfamily. OTCase family. As to quaternary structure, homohexamer; dimer of trimers. Ni(2+) is required as a cofactor.

The protein resides in the cytoplasm. The enzyme catalyses carbamoyl phosphate + L-ornithine = L-citrulline + phosphate + H(+). Its pathway is amino-acid degradation; L-arginine degradation via ADI pathway; carbamoyl phosphate from L-arginine: step 2/2. In terms of biological role, involved in the catabolism of arginine. Catalyzes the phosphorolysis of citrulline, the reverse reaction of the biosynthetic one, yielding ornithine and carbamoyl phosphate which serve to generate ATP from ADP. This chain is Ornithine carbamoyltransferase, catabolic, found in Lentilactobacillus hilgardii (Lactobacillus hilgardii).